Here is a 125-residue protein sequence, read N- to C-terminus: Fluoride-specific ion channel FluC (125 aa).

4 helical membrane passes run F3 to V23, I33 to F53, F65 to Y85, and L99 to L119. G75 and T78 together coordinate Na(+).

The protein belongs to the fluoride channel Fluc/FEX (TC 1.A.43) family.

It is found in the cell inner membrane. The enzyme catalyses fluoride(in) = fluoride(out). With respect to regulation, na(+) is not transported, but it plays an essential structural role and its presence is essential for fluoride channel function. Fluoride-specific ion channel. Important for reducing fluoride concentration in the cell, thus reducing its toxicity. The sequence is that of Fluoride-specific ion channel FluC from Thermosipho melanesiensis (strain DSM 12029 / CIP 104789 / BI429).